Reading from the N-terminus, the 105-residue chain is Vacuolar ATPase assembly integral membrane protein VMA21 homolog (105 aa).

The tract at residues 1–26 (MSTKNKKAAGGNGGAPKQTRQQSHDS) is disordered. The Cytoplasmic segment spans residues 1 to 36 (MSTKNKKAAGGNGGAPKQTRQQSHDSQDYSSFKTVL). Residues 37 to 57 (FYCMLIVFLPVLTFFVLKGFV) form a helical membrane-spanning segment. The Lumenal portion of the chain corresponds to 58–68 (LDQFLNISEVK). A helical transmembrane segment spans residues 69–89 (VNIASAVGAVVALHIALGLYI). Residues 90 to 105 (YRAYFGAPGSKGSKTD) lie on the Cytoplasmic side of the membrane.

It belongs to the VMA21 family.

It localises to the endoplasmic reticulum membrane. It is found in the endoplasmic reticulum-Golgi intermediate compartment membrane. The protein resides in the cytoplasmic vesicle. Its subcellular location is the COPII-coated vesicle membrane. Its function is as follows. Required for the assembly of the V0 complex of the vacuolar ATPase (V-ATPase) in the endoplasmic reticulum. The protein is Vacuolar ATPase assembly integral membrane protein VMA21 homolog of Drosophila sechellia (Fruit fly).